A 107-amino-acid polypeptide reads, in one-letter code: uncharacterized protein (107 aa).

The Glutaredoxin domain occupies 6–107 (KKVIEQILDN…QAQVETLLAA (102 aa)). Residue K23 participates in glutathione binding. C31 contacts [2Fe-2S] cluster. Residues R60 and 85–86 (AD) contribute to the glutathione site.

Belongs to the glutaredoxin family. Monothiol subfamily.

The protein resides in the plastid. The protein localises to the chloroplast. This is an uncharacterized protein from Porphyra purpurea (Red seaweed).